Here is a 292-residue protein sequence, read N- to C-terminus: Homoserine kinase (292 aa).

84-94 (PLARGMGSSSA) lines the ATP pocket.

Belongs to the GHMP kinase family. Homoserine kinase subfamily.

The protein localises to the cytoplasm. It carries out the reaction L-homoserine + ATP = O-phospho-L-homoserine + ADP + H(+). Its pathway is amino-acid biosynthesis; L-threonine biosynthesis; L-threonine from L-aspartate: step 4/5. In terms of biological role, catalyzes the ATP-dependent phosphorylation of L-homoserine to L-homoserine phosphate. The polypeptide is Homoserine kinase (Thermus thermophilus (strain ATCC 27634 / DSM 579 / HB8)).